The chain runs to 311 residues: Acetyl-coenzyme A carboxylase carboxyl transferase subunit alpha (311 aa).

One can recognise a CoA carboxyltransferase C-terminal domain in the interval 36 to 286 (NLEKEVAKVY…ASYFVSKLEK (251 aa)).

The protein belongs to the AccA family. Acetyl-CoA carboxylase is a heterohexamer composed of biotin carboxyl carrier protein (AccB), biotin carboxylase (AccC) and two subunits each of ACCase subunit alpha (AccA) and ACCase subunit beta (AccD).

It is found in the cytoplasm. The enzyme catalyses N(6)-carboxybiotinyl-L-lysyl-[protein] + acetyl-CoA = N(6)-biotinyl-L-lysyl-[protein] + malonyl-CoA. It functions in the pathway lipid metabolism; malonyl-CoA biosynthesis; malonyl-CoA from acetyl-CoA: step 1/1. Functionally, component of the acetyl coenzyme A carboxylase (ACC) complex. First, biotin carboxylase catalyzes the carboxylation of biotin on its carrier protein (BCCP) and then the CO(2) group is transferred by the carboxyltransferase to acetyl-CoA to form malonyl-CoA. The chain is Acetyl-coenzyme A carboxylase carboxyl transferase subunit alpha from Campylobacter curvus (strain 525.92).